A 236-amino-acid polypeptide reads, in one-letter code: 1-(5-phosphoribosyl)-5-[(5-phosphoribosylamino)methylideneamino] imidazole-4-carboxamide isomerase (236 aa).

Catalysis depends on aspartate 8, which acts as the Proton acceptor. Catalysis depends on aspartate 127, which acts as the Proton donor.

This sequence belongs to the HisA/HisF family.

The protein resides in the cytoplasm. It carries out the reaction 1-(5-phospho-beta-D-ribosyl)-5-[(5-phospho-beta-D-ribosylamino)methylideneamino]imidazole-4-carboxamide = 5-[(5-phospho-1-deoxy-D-ribulos-1-ylimino)methylamino]-1-(5-phospho-beta-D-ribosyl)imidazole-4-carboxamide. It participates in amino-acid biosynthesis; L-histidine biosynthesis; L-histidine from 5-phospho-alpha-D-ribose 1-diphosphate: step 4/9. The polypeptide is 1-(5-phosphoribosyl)-5-[(5-phosphoribosylamino)methylideneamino] imidazole-4-carboxamide isomerase (Campylobacter fetus subsp. fetus (strain 82-40)).